We begin with the raw amino-acid sequence, 405 residues long: Arginine biosynthesis bifunctional protein ArgJ (405 aa).

Positions 152, 178, 189, 276, 400, and 405 each coordinate substrate. Catalysis depends on threonine 189, which acts as the Nucleophile.

This sequence belongs to the ArgJ family. Heterotetramer of two alpha and two beta chains.

Its subcellular location is the cytoplasm. The enzyme catalyses N(2)-acetyl-L-ornithine + L-glutamate = N-acetyl-L-glutamate + L-ornithine. The catalysed reaction is L-glutamate + acetyl-CoA = N-acetyl-L-glutamate + CoA + H(+). It functions in the pathway amino-acid biosynthesis; L-arginine biosynthesis; L-ornithine and N-acetyl-L-glutamate from L-glutamate and N(2)-acetyl-L-ornithine (cyclic): step 1/1. Its pathway is amino-acid biosynthesis; L-arginine biosynthesis; N(2)-acetyl-L-ornithine from L-glutamate: step 1/4. Catalyzes two activities which are involved in the cyclic version of arginine biosynthesis: the synthesis of N-acetylglutamate from glutamate and acetyl-CoA as the acetyl donor, and of ornithine by transacetylation between N(2)-acetylornithine and glutamate. This chain is Arginine biosynthesis bifunctional protein ArgJ, found in Pseudomonas aeruginosa (strain ATCC 15692 / DSM 22644 / CIP 104116 / JCM 14847 / LMG 12228 / 1C / PRS 101 / PAO1).